A 637-amino-acid chain; its full sequence is 3D-(3,5/4)-trihydroxycyclohexane-1,2-dione hydrolase (637 aa).

Glu66 is a thiamine diphosphate binding site. The thiamine pyrophosphate binding stretch occupies residues 442–522 (SLPGDLQRLW…INILLFDNAG (81 aa)). The Mg(2+) site is built by Asp493 and Asn520.

This sequence belongs to the TPP enzyme family. Mg(2+) is required as a cofactor. Thiamine diphosphate serves as cofactor.

It catalyses the reaction 3D-3,5/4-trihydroxycyclohexane-1,2-dione + H2O = 5-deoxy-D-glucuronate + H(+). The protein operates within polyol metabolism; myo-inositol degradation into acetyl-CoA; acetyl-CoA from myo-inositol: step 3/7. In terms of biological role, involved in the cleavage of the C1-C2 bond of 3D-(3,5/4)-trihydroxycyclohexane-1,2-dione (THcHDO) to yield 5-deoxy-glucuronate (5DG). The chain is 3D-(3,5/4)-trihydroxycyclohexane-1,2-dione hydrolase from Shouchella clausii (strain KSM-K16) (Alkalihalobacillus clausii).